The primary structure comprises 646 residues: Sulfate transporter 3.2 (646 aa).

Over 1–76 (MSSKRASQYH…GYSLEYLKSD (76 aa)) the chain is Cytoplasmic. The helical transmembrane segment at 77-97 (VISGITIASLAIPQGISYAQL) threads the bilayer. The Extracellular segment spans residues 98-99 (AN). A helical membrane pass occupies residues 100 to 120 (LPPILGLYSSLVPPLVYAIMG). Topologically, residues 121–124 (SSRD) are cytoplasmic. Residues 125–145 (LAVGTVAVASLLTAAMLGKEV) form a helical membrane-spanning segment. Over 146–154 (NAVVNPKLY) the chain is Extracellular. A helical transmembrane segment spans residues 155-175 (LHLAFTATFFAGLMQTCLGLL). A topological domain (cytoplasmic) is located at residue arginine 176. A helical membrane pass occupies residues 177 to 197 (LGFVVEILSHAAIVGFMGGAA). At 198–235 (TVVCLQQLKGLLGLHHFTHSTDIVTVLRSIFSQSHMWR) the chain is on the extracellular side. Residues 236–256 (WESGVLGCCFLIFLLTTKYIS) form a helical membrane-spanning segment. Over 257–262 (KKRPKL) the chain is Cytoplasmic. The chain crosses the membrane as a helical span at residues 263–283 (FWISAMSPLVSVIFGTIFLYF). The Extracellular segment spans residues 284 to 315 (LHDQFHGIQFIGELKKGINPPSITHLVFTPPY). A helical transmembrane segment spans residues 316–336 (VMLALKVGIITGVIALAEGIA). The Cytoplasmic portion of the chain corresponds to 337 to 354 (VGRSFAMYKNYNIDGNKE). The chain crosses the membrane as a helical span at residues 355–375 (MIAFGMMNILGSFSSCYLTTG). The Extracellular portion of the chain corresponds to 376 to 390 (PFSRSAVNYNAGCKT). 2 helical membrane-spanning segments follow: residues 391 to 411 (ALSN…LTPL) and 412 to 432 (FFYT…LGLV). Topologically, residues 433–447 (DYEAAIHLWKLDKFD) are extracellular. The chain crosses the membrane as a helical span at residues 448–468 (FFVCLSAYLGVVFGTIEIGLI). Over 469-646 (LSVGISVMRL…DSPVPEFNNV (178 aa)) the chain is Cytoplasmic. Residues 504–627 (HYPQAITRSS…LTVAEAVAAC (124 aa)) form the STAS domain.

The protein belongs to the SLC26A/SulP transporter (TC 2.A.53) family. Expressed only in leaves.

It localises to the membrane. H(+)/sulfate cotransporter that may play a role in the regulation of sulfate assimilation. In Arabidopsis thaliana (Mouse-ear cress), this protein is Sulfate transporter 3.2 (SULTR3;2).